The sequence spans 88 residues: HssA/B-like protein 61 (88 aa).

The protein belongs to the hssA/B family.

In Dictyostelium discoideum (Social amoeba), this protein is HssA/B-like protein 61 (hssl61).